The sequence spans 367 residues: Tetraprenyl-beta-curcumene synthase (367 aa).

Belongs to the large terpene synthase family.

The enzyme catalyses all-trans-heptaprenyl diphosphate = (R)-tetraprenyl-beta-curcumene + diphosphate. Catalyzes the transformation of a linear C35 prenyl diphosphate chain to form tetraprenyl-beta-curcumene. The protein is Tetraprenyl-beta-curcumene synthase (ytpB) of Bacillus subtilis (strain 168).